The primary structure comprises 107 residues: L-rhamnose mutarotase (107 aa).

A substrate-binding site is contributed by Tyr-21. His-25 serves as the catalytic Proton donor. Residues Tyr-44 and 79–80 (WW) each bind substrate.

The protein belongs to the rhamnose mutarotase family. As to quaternary structure, homodimer.

It localises to the cytoplasm. The enzyme catalyses alpha-L-rhamnose = beta-L-rhamnose. It participates in carbohydrate metabolism; L-rhamnose metabolism. Functionally, involved in the anomeric conversion of L-rhamnose. In Agrobacterium fabrum (strain C58 / ATCC 33970) (Agrobacterium tumefaciens (strain C58)), this protein is L-rhamnose mutarotase.